Here is a 679-residue protein sequence, read N- to C-terminus: DNA ligase (679 aa).

NAD(+) contacts are provided by residues 36 to 40 (DEYYD) and 94 to 95 (SL). Residue lysine 126 is the N6-AMP-lysine intermediate of the active site. NAD(+) is bound by residues arginine 147, glutamate 181, lysine 299, and lysine 323. Zn(2+) is bound by residues cysteine 415, cysteine 418, cysteine 433, and cysteine 438. The region spanning 603–679 (IQSTKLENKT…DEEFLKKMLE (77 aa)) is the BRCT domain.

It belongs to the NAD-dependent DNA ligase family. LigA subfamily. Mg(2+) serves as cofactor. Mn(2+) is required as a cofactor.

The catalysed reaction is NAD(+) + (deoxyribonucleotide)n-3'-hydroxyl + 5'-phospho-(deoxyribonucleotide)m = (deoxyribonucleotide)n+m + AMP + beta-nicotinamide D-nucleotide.. Its function is as follows. DNA ligase that catalyzes the formation of phosphodiester linkages between 5'-phosphoryl and 3'-hydroxyl groups in double-stranded DNA using NAD as a coenzyme and as the energy source for the reaction. It is essential for DNA replication and repair of damaged DNA. This is DNA ligase from Mycoplasmopsis pulmonis (strain UAB CTIP) (Mycoplasma pulmonis).